A 380-amino-acid chain; its full sequence is MPLDPVALTADLVRCPSVTPEEGGALVLLERILTEAGFDCRRVDRNGVPNLFARWGRKGANRTFGFNGHTDVVPVGDAAAWTRDPFGGEIADGWLWGRGATDMKSGVAAFVAAAVDFVQETPPDGAVILTITGDEEGDSVDGTTALLDWMATEGEAMTVCLVGEPTCPERLGEMMKIGRRGSMTAFFTARGVQGHSAYPHRAKNPVSAMARLIDRLASHELDKGTGHFDPSTLAVTTIDTGNPATNVIPALCRATVNIRFNDRHSGASLIRWLEQEAAEVAAETGVEIGLSAKISGESFLTPPGELSELVARAVEAETGLRPEPSTSGGTSDARFVRAHCPVVEFGLVGKTMHQVDERVEVAQIEPLKAIYKRILKDYFT.

Histidine 69 contributes to the Zn(2+) binding site. Residue aspartate 71 is part of the active site. Aspartate 102 lines the Zn(2+) pocket. Glutamate 135 acts as the Proton acceptor in catalysis. Residues glutamate 136, glutamate 164, and histidine 353 each coordinate Zn(2+).

The protein belongs to the peptidase M20A family. DapE subfamily. As to quaternary structure, homodimer. Zn(2+) is required as a cofactor. The cofactor is Co(2+).

The catalysed reaction is N-succinyl-(2S,6S)-2,6-diaminopimelate + H2O = (2S,6S)-2,6-diaminopimelate + succinate. Its pathway is amino-acid biosynthesis; L-lysine biosynthesis via DAP pathway; LL-2,6-diaminopimelate from (S)-tetrahydrodipicolinate (succinylase route): step 3/3. Its function is as follows. Catalyzes the hydrolysis of N-succinyl-L,L-diaminopimelic acid (SDAP), forming succinate and LL-2,6-diaminopimelate (DAP), an intermediate involved in the bacterial biosynthesis of lysine and meso-diaminopimelic acid, an essential component of bacterial cell walls. The chain is Succinyl-diaminopimelate desuccinylase from Cereibacter sphaeroides (strain ATCC 17025 / ATH 2.4.3) (Rhodobacter sphaeroides).